Here is a 330-residue protein sequence, read N- to C-terminus: D-alanine--D-alanine ligase (330 aa).

The ATP-grasp domain maps to 120 to 326; the sequence is KLWLSALDIP…FKQFLEGIIR (207 aa). Residue 150–205 coordinates ATP; it reads AFRNWGAVFVKAASQGSSVGCYKVTDAAKLSEAVNAAFGYSDQVLVEKAVRPRELE. Residues aspartate 280, glutamate 293, and asparagine 295 each coordinate Mg(2+).

It belongs to the D-alanine--D-alanine ligase family. It depends on Mg(2+) as a cofactor. Requires Mn(2+) as cofactor.

It localises to the cytoplasm. It catalyses the reaction 2 D-alanine + ATP = D-alanyl-D-alanine + ADP + phosphate + H(+). Its pathway is cell wall biogenesis; peptidoglycan biosynthesis. Functionally, cell wall formation. The chain is D-alanine--D-alanine ligase from Tolumonas auensis (strain DSM 9187 / NBRC 110442 / TA 4).